The primary structure comprises 66 residues: UPF0337 protein SAG0606 (66 aa).

A compositionally biased stretch (basic and acidic residues) spans 1-10 (MSQEKLKSKV). The tract at residues 1–23 (MSQEKLKSKVEQASGSLKEGAGK) is disordered.

It belongs to the UPF0337 (CsbD) family.

This is UPF0337 protein SAG0606 from Streptococcus agalactiae serotype V (strain ATCC BAA-611 / 2603 V/R).